Here is a 194-residue protein sequence, read N- to C-terminus: Putative manganese efflux pump MntP (194 aa).

6 helical membrane passes run 3–23 (PFSI…AAIG), 37–57 (LRAG…GWVL), 69–89 (DHWI…IAGL), 110–132 (LGLA…SLAF), 147–167 (CTFS…NLIG), and 172–192 (ILGG…HLGA).

Belongs to the MntP (TC 9.B.29) family.

It is found in the cell inner membrane. Probably functions as a manganese efflux pump. In Xanthomonas oryzae pv. oryzae (strain MAFF 311018), this protein is Putative manganese efflux pump MntP.